We begin with the raw amino-acid sequence, 500 residues long: NAD(P)H-quinone oxidoreductase chain 4, chloroplastic (500 aa).

14 helical membrane-spanning segments follow: residues 3–23 (FFPW…VIFF), 37–57 (ICIC…HFQF), 84–104 (GLSI…TLAA), 111–129 (SRLF…IGSF), 134–154 (LLLF…LLSI), 167–187 (FILY…GVGL), 208–228 (ALEI…SPII), 242–262 (HYST…YGLI), 272–292 (AHSI…IYAA), 305–325 (IAYS…SITD), 330–350 (GAIL…FLAG), 386–406 (LALP…GIIT), 416–436 (ILIT…SLSM), and 462–482 (LFVS…PDFV).

Belongs to the complex I subunit 4 family.

It localises to the plastid. The protein localises to the chloroplast thylakoid membrane. The catalysed reaction is a plastoquinone + NADH + (n+1) H(+)(in) = a plastoquinol + NAD(+) + n H(+)(out). It catalyses the reaction a plastoquinone + NADPH + (n+1) H(+)(in) = a plastoquinol + NADP(+) + n H(+)(out). In Panax ginseng (Korean ginseng), this protein is NAD(P)H-quinone oxidoreductase chain 4, chloroplastic.